Reading from the N-terminus, the 263-residue chain is Retinoic acid early transcript 1E (263 aa).

Residues 1-30 (MRRISLTSSPVRLLLFLLLLLIALEIMVGG) form the signal peptide. An MHC class I alpha-1 like; down-regulates the cell surface expression of KLRK1 region spans residues 31 to 116 (HSLCFNFTIK…DIKPQIKTSD (86 aa)). Residues 31–225 (HSLCFNFTIK…IHWSSSSLPD (195 aa)) are Extracellular-facing. Asn36, Asn154, and Asn212 each carry an N-linked (GlcNAc...) asparagine glycan. Residues 117-207 (PSTLQVEMFC…GHWEAMPEPT (91 aa)) are MHC class I alpha-2 like; down-regulates the cell surface expression of KLRK1. Residues Cys126 and Cys189 are joined by a disulfide bond. Residues 226-248 (RWIILGAFILLVLMGIVLICVWW) traverse the membrane as a helical segment. Over 249 to 263 (QNGEWQAGLWPLRTS) the chain is Cytoplasmic.

This sequence belongs to the MHC class I family. Binds to KLRK1/NKG2D. As to quaternary structure, (Microbial infection) Contrary to other family members, does not interact with CMV glycoprotein UL16. As to expression, predominantly expressed in the skin, but also expressed in testis and trachea. Up-regulated in tumor cells of different origins. Expression progressively decreased after treatment of tumor cells with retinoic acid.

Its subcellular location is the membrane. It is found in the secreted. In terms of biological role, binds and activates the KLRK1/NKG2D receptor, mediating natural killer cell cytotoxicity. The chain is Retinoic acid early transcript 1E from Homo sapiens (Human).